The chain runs to 386 residues: Outer membrane protein assembly factor BamB (386 aa).

A signal peptide spans 1–25 (MMRNSRPGRAWRGAVVLTGLLALSG). A lipid anchor (N-palmitoyl cysteine) is attached at cysteine 26. The S-diacylglycerol cysteine moiety is linked to residue cysteine 26.

This sequence belongs to the BamB family. In terms of assembly, part of the Bam complex.

It localises to the cell outer membrane. Its function is as follows. Part of the outer membrane protein assembly complex, which is involved in assembly and insertion of beta-barrel proteins into the outer membrane. This is Outer membrane protein assembly factor BamB from Bordetella pertussis (strain Tohama I / ATCC BAA-589 / NCTC 13251).